We begin with the raw amino-acid sequence, 573 residues long: Leucine aminopeptidase, chloroplastic (573 aa).

The N-terminal 53 residues, 1–53, are a transit peptide targeting the chloroplast; that stretch reads MATLRVSSLLASSPSSLHCNPSVFTKCQSSPRWAFSFSVTPLCSRRSKRIVHC. Positions 342 and 347 each coordinate Mn(2+). The active site involves Lys-354. 3 residues coordinate Mn(2+): Asp-367, Asp-427, and Glu-429. Arg-431 is a catalytic residue.

This sequence belongs to the peptidase M17 family. In terms of assembly, homohexamer (dimer of homotrimers). It depends on Mn(2+) as a cofactor. In tubers and floral buds of untreated plants. After abscisic acid (ABA) treatment or mechanical wounding is mostly accumulated in leaves, to a lesser extent in stems, but not in roots.

It localises to the plastid. Its subcellular location is the chloroplast. The catalysed reaction is Release of an N-terminal amino acid, Xaa-|-Yaa-, in which Xaa is preferably Leu, but may be other amino acids including Pro although not Arg or Lys, and Yaa may be Pro. Amino acid amides and methyl esters are also readily hydrolyzed, but rates on arylamides are exceedingly low.. The enzyme catalyses Release of N-terminal proline from a peptide.. Functionally, presumably involved in the processing and regular turnover of intracellular proteins. This is Leucine aminopeptidase, chloroplastic (LAP) from Solanum tuberosum (Potato).